A 75-amino-acid polypeptide reads, in one-letter code: Protein Tlp homolog (75 aa).

This sequence belongs to the Tlp family.

In Clostridium acetobutylicum (strain ATCC 824 / DSM 792 / JCM 1419 / IAM 19013 / LMG 5710 / NBRC 13948 / NRRL B-527 / VKM B-1787 / 2291 / W), this protein is Protein Tlp homolog.